A 353-amino-acid chain; its full sequence is Ferrochelatase (353 aa).

Residues 1–13 are compositionally biased toward basic and acidic residues; that stretch reads MTLERTGRDEEKA. Positions 1–23 are disordered; the sequence is MTLERTGRDEEKALTQPPSGHSS. Positions 223 and 304 each coordinate Fe cation.

The protein belongs to the ferrochelatase family.

The protein resides in the cytoplasm. It catalyses the reaction heme b + 2 H(+) = protoporphyrin IX + Fe(2+). It participates in porphyrin-containing compound metabolism; protoheme biosynthesis; protoheme from protoporphyrin-IX: step 1/1. Functionally, catalyzes the ferrous insertion into protoporphyrin IX. This chain is Ferrochelatase, found in Chelativorans sp. (strain BNC1).